Reading from the N-terminus, the 267-residue chain is Thiamine thiazole synthase (267 aa).

Residues S41, 60-61, G68, V132, and 160-162 contribute to the NAD(+) site; these read ER and HVD. Residues D162 and H177 each coordinate Fe cation. An NAD(+)-binding site is contributed by M227. Position 237 (R237) interacts with glycine.

It belongs to the THI4 family. Homooctamer; tetramer of dimers. Fe(2+) is required as a cofactor.

It catalyses the reaction hydrogen sulfide + glycine + NAD(+) = ADP-5-ethyl-4-methylthiazole-2-carboxylate + nicotinamide + 3 H2O + H(+). Its pathway is cofactor biosynthesis; thiamine diphosphate biosynthesis. Its function is as follows. Involved in the biosynthesis of the thiazole moiety of thiamine. Catalyzes the conversion of NAD and glycine to adenosine diphosphate 5-(2-hydroxyethyl)-4-methylthiazole-2-carboxylate (ADT), an adenylated thiazole intermediate, using free sulfide as a source of sulfur. This chain is Thiamine thiazole synthase, found in Saccharolobus islandicus (strain M.14.25 / Kamchatka #1) (Sulfolobus islandicus).